A 503-amino-acid chain; its full sequence is Cytochrome P450 71B6 (503 aa).

A helical transmembrane segment spans residues 10-30 (TELLPWLLLLLIPPLLIFFLL). A heme-binding site is contributed by cysteine 446.

Belongs to the cytochrome P450 family. It depends on heme as a cofactor.

It is found in the membrane. The protein is Cytochrome P450 71B6 (CYP71B6) of Arabidopsis thaliana (Mouse-ear cress).